The following is a 285-amino-acid chain: Hsp90 co-chaperone Cdc37-like 1 (285 aa).

Residues 34–54 are disordered; it reads LHNSESMDQEQAMAQAELSEL. Residues 35-73 adopt a coiled-coil conformation; that stretch reads HNSESMDQEQAMAQAELSELQRSEEEWRRKEAALSQGEN.

The protein belongs to the CDC37 family. Forms complexes with Hsp70 and Hsp90.

The protein resides in the cytoplasm. In terms of biological role, co-chaperone that binds to numerous proteins and promotes their interaction with Hsp70 and Hsp90. The polypeptide is Hsp90 co-chaperone Cdc37-like 1 (cdc37l1) (Xenopus tropicalis (Western clawed frog)).